Consider the following 232-residue polypeptide: Large ribosomal subunit protein uL3 (232 aa).

The protein belongs to the universal ribosomal protein uL3 family. Part of the 50S ribosomal subunit. Forms a cluster with proteins L14 and L19.

Functionally, one of the primary rRNA binding proteins, it binds directly near the 3'-end of the 23S rRNA, where it nucleates assembly of the 50S subunit. This chain is Large ribosomal subunit protein uL3, found in Hydrogenobaculum sp. (strain Y04AAS1).